Here is a 176-residue protein sequence, read N- to C-terminus: V-type proton ATPase 16 kDa proteolipid subunit (176 aa).

Topologically, residues 1–17 (MSVLLRSVTELCPVYSP) are lumenal. Residues 18 to 38 (FFGSMGITASIVFTVFGGAYG) form a helical membrane-spanning segment. At 39–62 (TAKSSVGISSVGVMKPEFIMRSLF) the chain is on the cytoplasmic side. The helical transmembrane segment at 63–83 (PVVFAGVIGLYGLIVCIVLFI) threads the bilayer. The Lumenal segment spans residues 84-98 (NVNKSEYSLNRAFLD). The chain crosses the membrane as a helical span at residues 99-119 (LGAGLTCGLCGLASGMSIGIS). Residues 120-136 (GDCGVRGAAQQPKLFVS) lie on the Cytoplasmic side of the membrane. A helical membrane pass occupies residues 137–157 (MLICLIFSEALALYGFIVALI). Residues 158–176 (MAATGDNSCVATASTSSSS) lie on the Lumenal side of the membrane.

This sequence belongs to the V-ATPase proteolipid subunit family. As to quaternary structure, V-ATPase is a heteromultimeric enzyme composed of a peripheral catalytic V1 complex (main components: subunits A, B, C, D, E, and F) attached to an integral membrane V0 proton pore complex (main component: the proteolipid protein; which is present as a hexamer that forms the proton-conducting pore).

The protein resides in the vacuole membrane. Its function is as follows. Proton-conducting pore forming subunit of the membrane integral V0 complex of vacuolar ATPase. V-ATPase is responsible for acidifying a variety of intracellular compartments in eukaryotic cells. This is V-type proton ATPase 16 kDa proteolipid subunit (VMA3) from Entamoeba dispar.